The primary structure comprises 213 residues: ATP-dependent Clp protease proteolytic subunit (213 aa).

Serine 114 (nucleophile) is an active-site residue. Histidine 139 is a catalytic residue.

This sequence belongs to the peptidase S14 family. Fourteen ClpP subunits assemble into 2 heptameric rings which stack back to back to give a disk-like structure with a central cavity, resembling the structure of eukaryotic proteasomes.

It is found in the cytoplasm. It catalyses the reaction Hydrolysis of proteins to small peptides in the presence of ATP and magnesium. alpha-casein is the usual test substrate. In the absence of ATP, only oligopeptides shorter than five residues are hydrolyzed (such as succinyl-Leu-Tyr-|-NHMec, and Leu-Tyr-Leu-|-Tyr-Trp, in which cleavage of the -Tyr-|-Leu- and -Tyr-|-Trp bonds also occurs).. Functionally, cleaves peptides in various proteins in a process that requires ATP hydrolysis. Has a chymotrypsin-like activity. Plays a major role in the degradation of misfolded proteins. This chain is ATP-dependent Clp protease proteolytic subunit, found in Pseudomonas entomophila (strain L48).